Here is a 206-residue protein sequence, read N- to C-terminus: Small ribosomal subunit protein uS4 (206 aa).

Residues 96-156 (SRLDNVVYRM…EKSKKQVRIA (61 aa)) enclose the S4 RNA-binding domain.

This sequence belongs to the universal ribosomal protein uS4 family. In terms of assembly, part of the 30S ribosomal subunit. Contacts protein S5. The interaction surface between S4 and S5 is involved in control of translational fidelity.

Functionally, one of the primary rRNA binding proteins, it binds directly to 16S rRNA where it nucleates assembly of the body of the 30S subunit. Its function is as follows. With S5 and S12 plays an important role in translational accuracy. The protein is Small ribosomal subunit protein uS4 of Laribacter hongkongensis (strain HLHK9).